A 511-amino-acid polypeptide reads, in one-letter code: Protein phosphatase 2C 7 (511 aa).

The first 19 residues, Met1–Cys19, serve as a signal peptide directing secretion. One can recognise a PPM-type phosphatase domain in the interval Leu188–Leu501. Residues Asp242, Gly243, Asp432, and Asp492 each coordinate Mn(2+).

Belongs to the PP2C family. In terms of assembly, interacts with PYL13. Requires Mg(2+) as cofactor. It depends on Mn(2+) as a cofactor. Expressed in seeds.

It catalyses the reaction O-phospho-L-seryl-[protein] + H2O = L-seryl-[protein] + phosphate. The catalysed reaction is O-phospho-L-threonyl-[protein] + H2O = L-threonyl-[protein] + phosphate. Key component and repressor of the abscisic acid (ABA) signaling pathway that regulates numerous ABA responses, such as stomatal closure, seed germination and inhibition of vegetative growth. This is Protein phosphatase 2C 7 (HAB2) from Arabidopsis thaliana (Mouse-ear cress).